Consider the following 89-residue polypeptide: Small ribosomal subunit protein uS15 (89 aa).

This sequence belongs to the universal ribosomal protein uS15 family. Part of the 30S ribosomal subunit. Forms a bridge to the 50S subunit in the 70S ribosome, contacting the 23S rRNA.

One of the primary rRNA binding proteins, it binds directly to 16S rRNA where it helps nucleate assembly of the platform of the 30S subunit by binding and bridging several RNA helices of the 16S rRNA. In terms of biological role, forms an intersubunit bridge (bridge B4) with the 23S rRNA of the 50S subunit in the ribosome. The protein is Small ribosomal subunit protein uS15 of Pseudomonas savastanoi pv. phaseolicola (strain 1448A / Race 6) (Pseudomonas syringae pv. phaseolicola (strain 1448A / Race 6)).